A 327-amino-acid chain; its full sequence is Movement protein (327 aa).

Residues 297–327 are a coiled coil; the sequence is SASSSNTENELARVSQNIDLLKNKLKEICGE.

The protein belongs to the caulimoviridae movement protein family. As to quaternary structure, homotrimer, through the coiled-coil domain. Interacts with VAP. May interact (via N-terminus) with host prenylated Rab acceptor protein 1D (PRA1D).

It localises to the host cell junction. It is found in the host plasmodesma. Functionally, transports viral genome to neighboring plant cells directly through plasmosdesmata, without any budding. The movement protein allows efficient cell to cell propagation, by bypassing the host cell wall barrier. Acts by forming tubules structures that increase the size exclusion limit (SEL) of plasmodesmata, thereby allowing viral ribonucleocapsids to spread directly to neighboring cells. The polypeptide is Movement protein (Arabidopsis thaliana (Mouse-ear cress)).